A 458-amino-acid chain; its full sequence is Ribulose bisphosphate carboxylase large chain (458 aa).

Lysine 7 carries the post-translational modification N6,N6,N6-trimethyllysine. Asparagine 116 and threonine 166 together coordinate substrate. The active-site Proton acceptor is lysine 168. Residue lysine 170 coordinates substrate. Lysine 194, aspartate 196, and glutamate 197 together coordinate Mg(2+). Lysine 194 carries the post-translational modification N6-carboxylysine. The active-site Proton acceptor is histidine 287. Residues arginine 288, histidine 320, and serine 372 each coordinate substrate.

It belongs to the RuBisCO large chain family. Type I subfamily. As to quaternary structure, heterohexadecamer of 8 large chains and 8 small chains; disulfide-linked. The disulfide link is formed within the large subunit homodimers. The cofactor is Mg(2+). The disulfide bond which can form in the large chain dimeric partners within the hexadecamer appears to be associated with oxidative stress and protein turnover.

It is found in the plastid. It localises to the chloroplast. The catalysed reaction is 2 (2R)-3-phosphoglycerate + 2 H(+) = D-ribulose 1,5-bisphosphate + CO2 + H2O. It carries out the reaction D-ribulose 1,5-bisphosphate + O2 = 2-phosphoglycolate + (2R)-3-phosphoglycerate + 2 H(+). In terms of biological role, ruBisCO catalyzes two reactions: the carboxylation of D-ribulose 1,5-bisphosphate, the primary event in carbon dioxide fixation, as well as the oxidative fragmentation of the pentose substrate in the photorespiration process. Both reactions occur simultaneously and in competition at the same active site. The protein is Ribulose bisphosphate carboxylase large chain of Gladiolus gueinzii (Coastal gladiolus).